The chain runs to 808 residues: Transducin beta-like protein 3 (808 aa).

A2 is subject to N-acetylalanine. 13 WD repeats span residues 64 to 105, 107 to 146, 149 to 190, 193 to 232, 245 to 284, 290 to 329, 332 to 372, 374 to 413, 419 to 459, 477 to 516, 519 to 560, 562 to 602, and 604 to 642; these read EDQE…RLWK, IHTA…GTHH, GSPG…CLAV, AHYS…ATRT, LPEE…CVYT, GPGQ…LQKQ, GYSE…CQIL, GHTD…QVMC, GHTH…LSKN, CHDK…LLGV, GHRR…KTFE, HDAS…RTLD, and HEDK…EQAE. S257 carries the phosphoserine modification. A Glycyl lysine isopeptide (Lys-Gly) (interchain with G-Cter in SUMO2) cross-link involves residue K407.

As to quaternary structure, part of the small subunit (SSU) processome, composed of more than 70 proteins and the RNA chaperone small nucleolar RNA (snoRNA) U3.

Its subcellular location is the nucleus. It is found in the nucleolus. Part of the small subunit (SSU) processome, first precursor of the small eukaryotic ribosomal subunit. During the assembly of the SSU processome in the nucleolus, many ribosome biogenesis factors, an RNA chaperone and ribosomal proteins associate with the nascent pre-rRNA and work in concert to generate RNA folding, modifications, rearrangements and cleavage as well as targeted degradation of pre-ribosomal RNA by the RNA exosome. In Homo sapiens (Human), this protein is Transducin beta-like protein 3.